The primary structure comprises 87 residues: Small ribosomal subunit protein bS20 (87 aa).

Residues 1–12 (MANHKSALKRNR) show a composition bias toward basic residues. Positions 1-21 (MANHKSALKRNRQAAVRNARN) are disordered.

It belongs to the bacterial ribosomal protein bS20 family.

Its function is as follows. Binds directly to 16S ribosomal RNA. The polypeptide is Small ribosomal subunit protein bS20 (Syntrophotalea carbinolica (strain DSM 2380 / NBRC 103641 / GraBd1) (Pelobacter carbinolicus)).